We begin with the raw amino-acid sequence, 267 residues long: NAD kinase 2 (267 aa).

D50 acts as the Proton acceptor in catalysis. Residues 50-51 (DG), K55, 122-123 (NE), R149, D151, 162-167 (TAYNKS), and A186 contribute to the NAD(+) site.

This sequence belongs to the NAD kinase family. A divalent metal cation serves as cofactor.

It is found in the cytoplasm. The catalysed reaction is NAD(+) + ATP = ADP + NADP(+) + H(+). Involved in the regulation of the intracellular balance of NAD and NADP, and is a key enzyme in the biosynthesis of NADP. Catalyzes specifically the phosphorylation on 2'-hydroxyl of the adenosine moiety of NAD to yield NADP. The chain is NAD kinase 2 from Listeria monocytogenes serovar 1/2a (strain ATCC BAA-679 / EGD-e).